The following is a 150-amino-acid chain: Dual specificity protein phosphatase 23 (150 aa).

The Tyrosine-protein phosphatase domain occupies 7-150 (NFSWVLPGRL…AVFQFYQRTK (144 aa)). The active-site Phosphocysteine intermediate is C95.

This sequence belongs to the protein-tyrosine phosphatase family. Non-receptor class dual specificity subfamily. As to expression, widely expressed.

The protein resides in the cytoplasm. Its subcellular location is the cytosol. It is found in the nucleus. The catalysed reaction is O-phospho-L-tyrosyl-[protein] + H2O = L-tyrosyl-[protein] + phosphate. It carries out the reaction O-phospho-L-seryl-[protein] + H2O = L-seryl-[protein] + phosphate. The enzyme catalyses O-phospho-L-threonyl-[protein] + H2O = L-threonyl-[protein] + phosphate. In terms of biological role, protein phosphatase that mediates dephosphorylation of proteins phosphorylated on Tyr and Ser/Thr residues. In vitro, it can dephosphorylate p44-ERK1 (MAPK3) but not p54 SAPK-beta (MAPK10) in vitro. Able to enhance activation of JNK and p38 (MAPK14). The protein is Dual specificity protein phosphatase 23 (Dusp23) of Mus musculus (Mouse).